Consider the following 244-residue polypeptide: Probable phosphatase NT01CX_1282 (244 aa).

Positions 8, 10, 16, 41, 74, 102, 132, 193, and 195 each coordinate Zn(2+).

It belongs to the PHP family. Requires Zn(2+) as cofactor.

The chain is Probable phosphatase NT01CX_1282 from Clostridium novyi (strain NT).